Consider the following 65-residue polypeptide: Large ribosomal subunit protein uL29 (65 aa).

This sequence belongs to the universal ribosomal protein uL29 family.

This is Large ribosomal subunit protein uL29 from Mycoplasmopsis pulmonis (strain UAB CTIP) (Mycoplasma pulmonis).